The sequence spans 159 residues: NADH-quinone oxidoreductase subunit I (159 aa).

4Fe-4S ferredoxin-type domains follow at residues 51–80 (RRYENGEERCIACKLCEAICPAQAIVIEAD) and 90–119 (TRYDIDMTKCIYCGLCQAACPVDAIVEGPN). 8 residues coordinate [4Fe-4S] cluster: Cys60, Cys63, Cys66, Cys70, Cys99, Cys102, Cys105, and Cys109.

This sequence belongs to the complex I 23 kDa subunit family. NDH-1 is composed of 14 different subunits. Subunits NuoA, H, J, K, L, M, N constitute the membrane sector of the complex. [4Fe-4S] cluster is required as a cofactor.

The protein localises to the cell inner membrane. It catalyses the reaction a quinone + NADH + 5 H(+)(in) = a quinol + NAD(+) + 4 H(+)(out). Its function is as follows. NDH-1 shuttles electrons from NADH, via FMN and iron-sulfur (Fe-S) centers, to quinones in the respiratory chain. The immediate electron acceptor for the enzyme in this species is believed to be ubiquinone. Couples the redox reaction to proton translocation (for every two electrons transferred, four hydrogen ions are translocated across the cytoplasmic membrane), and thus conserves the redox energy in a proton gradient. The sequence is that of NADH-quinone oxidoreductase subunit I from Rickettsia massiliae (strain Mtu5).